The sequence spans 371 residues: Methylthioribose-1-phosphate isomerase (371 aa).

Residues 53-55 (RGA), Arg-90, and Gln-203 each bind substrate. Catalysis depends on Asp-243, which acts as the Proton donor. 253–254 (NK) lines the substrate pocket.

The protein belongs to the eIF-2B alpha/beta/delta subunits family. MtnA subfamily.

The catalysed reaction is 5-(methylsulfanyl)-alpha-D-ribose 1-phosphate = 5-(methylsulfanyl)-D-ribulose 1-phosphate. It carries out the reaction 5-deoxy-alpha-D-ribose 1-phosphate = 5-deoxy-D-ribulose 1-phosphate. The protein operates within amino-acid biosynthesis; L-methionine biosynthesis via salvage pathway; L-methionine from S-methyl-5-thio-alpha-D-ribose 1-phosphate: step 1/6. Catalyzes the interconversion of methylthioribose-1-phosphate (MTR-1-P) into methylthioribulose-1-phosphate (MTRu-1-P). Also catalyzes the interconversion of 5-deoxyribose 1-phosphate and 5-deoxyribulose 1-phosphate. Part of a bifunctional DHAP-shunt salvage pathway for SAM by-products. In Escherichia coli O45:K1 (strain S88 / ExPEC), this protein is Methylthioribose-1-phosphate isomerase.